An 877-amino-acid polypeptide reads, in one-letter code: DNA repair protein rad16 (877 aa).

Position 71 is a phosphoserine; by CK2 (Ser-71). The tract at residues 440-490 (SKSIKKPEPSKEREASNTTSRKGVPPSKRRRVRGGNNATSRTTSDNTDAND) is disordered. Basic and acidic residues predominate over residues 444-454 (KKPEPSKEREA). The segment covering 475 to 490 (NNATSRTTSDNTDAND) has biased composition (polar residues). In terms of domain architecture, ERCC4 spans 652-732 (RVIVDLREFR…IPVLLIEFEQ (81 aa)).

The protein belongs to the XPF family. As to quaternary structure, heterodimer composed of rad16 and swi10.

It localises to the nucleus. Its subcellular location is the cytoplasm. The protein resides in the cytoskeleton. The protein localises to the microtubule organizing center. It is found in the spindle pole body. Its function is as follows. Endonuclease that specifically degrades single-stranded DNA and which is involved in nucleotide excision repair of DNA damaged with UV light, bulky adducts, or cross-linking agents. Required for double strand break-induced interchromosomal gene conversion. The polypeptide is DNA repair protein rad16 (rad16) (Schizosaccharomyces pombe (strain 972 / ATCC 24843) (Fission yeast)).